We begin with the raw amino-acid sequence, 224 residues long: Respiratory supercomplex factor 2, mitochondrial (224 aa).

At 1 to 13 the chain is on the mitochondrial intermembrane side; the sequence is MKILTQDEIEAHR. The helical transmembrane segment at 14-38 threads the bilayer; that stretch reads SHTLKGGIEGALAGFAISAIIFKVL. Topologically, residues 39-47 are mitochondrial matrix; the sequence is PRRYPKFKP. The helical transmembrane segment at 48–75 threads the bilayer; that stretch reads STLTWSIKTALWITPPTVLTAICAEEAS. Over 76–103 the chain is Mitochondrial intermembrane; the sequence is NNFDATMYGSGSSSEDALDEHRRWKSLS. Residues 89 to 180 form the HIG1 domain; it reads SEDALDEHRR…YENKLHPNKQ (92 aa). The helical transmembrane segment at 104–133 threads the bilayer; that stretch reads TKDKFVEGLSNNKYKIITGAWAASLYGSWV. The Mitochondrial matrix segment spans residues 134–142; it reads IVNKDPIMT. A helical membrane pass occupies residues 143–173; that stretch reads KAQKIVQARMYAQFITVGLLLASVGLSMYEN. The Mitochondrial intermembrane segment spans residues 174–184; the sequence is KLHPNKQKVNE. Residues 185–204 form a helical membrane-spanning segment; that stretch reads MRRWENALRVAEEEERLEKE. Over 205–224 the chain is Mitochondrial matrix; the sequence is GRRTGYVSNEERINSKIFKS.

Associates with a subpopulation of the cytochrome bc1-cytochrome c oxidase supercomplexes. Associates in substoichiometric amounts with complex IV. Interacts with COX3.

The protein resides in the mitochondrion membrane. Functionally, assembly factor that plays a role in the assembly of the respiratory chain supercomplexes (SCs) composed of ubiquinol-cytochrome c oxidoreductase (cytochrome b-c1 complex, complex III, CIII) and cytochrome c oxidase (complex IV, CIV). May be required for late-stage assembly of the COX12 and COX13 subunits. Required for the generation and maintenance of a normal proton motive force (PMF) across the inner mitochondrial membrane (IMM) by preventing proton leakage through an inactive population of CIV that accumulates when RCF1 and/or RCF2 proteins are absent. The protein is Respiratory supercomplex factor 2, mitochondrial (RCF2) of Saccharomyces cerevisiae (strain ATCC 204508 / S288c) (Baker's yeast).